The following is a 282-amino-acid chain: NADPH-dependent 7-cyano-7-deazaguanine reductase (282 aa).

Residue 88–90 (IES) participates in substrate binding. 90-91 (SK) is an NADPH binding site. The Thioimide intermediate role is filled by cysteine 190. Aspartate 197 functions as the Proton donor in the catalytic mechanism. Substrate is bound at residue 229-230 (HE). 258–259 (RG) serves as a coordination point for NADPH.

This sequence belongs to the GTP cyclohydrolase I family. QueF type 2 subfamily. As to quaternary structure, homodimer.

The protein localises to the cytoplasm. The enzyme catalyses 7-aminomethyl-7-carbaguanine + 2 NADP(+) = 7-cyano-7-deazaguanine + 2 NADPH + 3 H(+). Its pathway is tRNA modification; tRNA-queuosine biosynthesis. Its function is as follows. Catalyzes the NADPH-dependent reduction of 7-cyano-7-deazaguanine (preQ0) to 7-aminomethyl-7-deazaguanine (preQ1). The polypeptide is NADPH-dependent 7-cyano-7-deazaguanine reductase (Escherichia coli O17:K52:H18 (strain UMN026 / ExPEC)).